Here is a 657-residue protein sequence, read N- to C-terminus: Kinesin-like protein KIF22 (657 aa).

Residues 1 to 33 (MNVRAKKKPQQREMASASSGPSRSLSKGGVSRR) form a disordered region. A compositionally biased stretch (low complexity) spans 16 to 33 (SASSGPSRSLSKGGVSRR). The 323-residue stretch at 38–360 (RVRVAVRLRP…LNFTARSKEV (323 aa)) folds into the Kinesin motor domain. Position 119–126 (119–126 (GPTGAGKT)) interacts with ATP. The interval 388 to 415 (PSEAKKAKGPEEESTGSPESTAAPASAS) is disordered. The span at 402–415 (TGSPESTAAPASAS) shows a compositional bias: low complexity. Phosphoserine occurs at positions 404, 419, and 444. Residue Lys-457 forms a Glycyl lysine isopeptide (Lys-Gly) (interchain with G-Cter in SUMO2) linkage. Residues 457-502 (KRERMVLIKTVEEKNLEIERLKMKQKELEAKVLAQEALDPKEKENT) are a coiled coil. 3 positions are modified to phosphoserine: Ser-537, Ser-554, and Ser-573.

This sequence belongs to the TRAFAC class myosin-kinesin ATPase superfamily. Kinesin family. Interacts with FAM83D and SIAH1. Ubiquitinated; mediated by SIAH1 and leading to its subsequent proteasomal degradation.

It localises to the nucleus. Its subcellular location is the cytoplasm. It is found in the cytoskeleton. Its function is as follows. Kinesin family member that is involved in spindle formation and the movements of chromosomes during mitosis and meiosis. Binds to microtubules and to DNA. Plays a role in congression of laterally attached chromosomes in NDC80-depleted cells. The protein is Kinesin-like protein KIF22 (Kif22) of Rattus norvegicus (Rat).